Here is a 75-residue protein sequence, read N- to C-terminus: Tetrahydromethanopterin S-methyltransferase subunit F (75 aa).

The helical transmembrane segment at 53–73 (FAGLACGMVFAGVLLVPLLLL) threads the bilayer.

The protein belongs to the MtrF family. As to quaternary structure, the complex is composed of 8 subunits; MtrA, MtrB, MtrC, MtrD, MtrE, MtrF, MtrG and MtrH.

It is found in the cell membrane. The catalysed reaction is 5-methyl-5,6,7,8-tetrahydromethanopterin + coenzyme M + 2 Na(+)(in) = 5,6,7,8-tetrahydromethanopterin + methyl-coenzyme M + 2 Na(+)(out). The protein operates within one-carbon metabolism; methanogenesis from CO(2); methyl-coenzyme M from 5,10-methylene-5,6,7,8-tetrahydromethanopterin: step 2/2. Functionally, part of a complex that catalyzes the formation of methyl-coenzyme M and tetrahydromethanopterin from coenzyme M and methyl-tetrahydromethanopterin. This is an energy-conserving, sodium-ion translocating step. This Methanopyrus kandleri (strain AV19 / DSM 6324 / JCM 9639 / NBRC 100938) protein is Tetrahydromethanopterin S-methyltransferase subunit F.